Here is a 247-residue protein sequence, read N- to C-terminus: Cell division protein ZapD (247 aa).

The protein belongs to the ZapD family. As to quaternary structure, interacts with FtsZ.

The protein resides in the cytoplasm. Cell division factor that enhances FtsZ-ring assembly. Directly interacts with FtsZ and promotes bundling of FtsZ protofilaments, with a reduction in FtsZ GTPase activity. The chain is Cell division protein ZapD from Salmonella dublin (strain CT_02021853).